A 1005-amino-acid chain; its full sequence is Sorbin and SH3 domain-containing protein 1 homolog (1005 aa).

Disordered stretches follow at residues 1–31, 61–86, 99–153, 243–292, 386–409, 427–475, and 542–622; these read MMHHPHPFGSNLANSSEPQQPSGQYLNPAAD, LDMKTPTGNSSRYQKPAPPPVDSTPS, YVDP…PHSA, NELK…FNSE, FEEKQNRSPMTSTPSYKEQGFKND, TTKN…TAAA, and MHRK…SNEE. Polar residues predominate over residues 11–25; that stretch reads NLANSSEPQQPSGQY. Positions 260–269 are enriched in polar residues; that stretch reads VMTSSTENLK. The span at 270–279 shows a compositional bias: low complexity; it reads NGNNQQNQQP. Over residues 392-409 the composition is skewed to polar residues; that stretch reads RSPMTSTPSYKEQGFKND. Over residues 448–475 the composition is skewed to low complexity; the sequence is SDTYPVSSSTTSTWPSHTTTPTTTTAAA. Residues 499 to 567 enclose the SoHo domain; sequence VMSTNMDEPI…FINPSNVTDG (69 aa). The span at 544 to 557 shows a compositional bias: basic and acidic residues; the sequence is RKGEDGSNEGKEQH. Over residues 559 to 589 the composition is skewed to polar residues; sequence INPSNVTDGIGRTTPTASNLGRSRENLSFNQ. The stretch at 610-642 forms a coiled coil; sequence YNNQERVKQSNEEELLRLKAEKLAEELRKEKER. SH3 domains lie at 683-742, 745-805, and 946-1005; these read QPVM…INTG, GDSQ…PIEQ, and KGSE…VKRH.

May interact with deb-1. As to expression, expressed in body wall muscles, muscle arm attachment sites at the nerve ring, all non-striated muscles, and distal tip cells of the gonad. Highly expressed in the origins and insertions of the vulval and anal depressor muscles and the spicule-associated and diagonal muscles of the male tail. Expressed in small puncta throughout the uterus, stomatointestinal muscle and proximal gonadal sheath tissues. Not expressed in the pharynx.

The protein resides in the cell junction. It localises to the adherens junction. It is found in the cell membrane. The protein localises to the focal adhesion. In terms of biological role, required for organization of sarcomeres in body wall muscles and for maintaining normal mitochondrial position in myocytes. This is Sorbin and SH3 domain-containing protein 1 homolog from Caenorhabditis elegans.